A 284-amino-acid polypeptide reads, in one-letter code: MPAAISRNWPAPAKLNLFLHINGRRADGYHELQTLFQFIDCCDMLDFKVTETPELILHSNMSGVVADSDNLILRAAKSLQQTTGFNGGAEIWLDKRLPMGGGLGGGSSDAATTLVALNKLWHTQLSTEELAKIGLKLGADIPVFIHGFAAFAEGVGERLQAVNPGEPWYLVIAPDAHVSTADVFQDPLLPRDTPKLAIDTLMSQPWANDCQKLVVSKYPQVAKALGWLLEYAPSRMTGTGACVFGEFTQQQQALAALAKLPSEMQGFVAQGMNLSPLITRLSHP.

The active site involves lysine 14. Position 98–108 (98–108 (PMGGGLGGGSS)) interacts with ATP. Aspartate 140 is a catalytic residue.

Belongs to the GHMP kinase family. IspE subfamily.

The catalysed reaction is 4-CDP-2-C-methyl-D-erythritol + ATP = 4-CDP-2-C-methyl-D-erythritol 2-phosphate + ADP + H(+). It functions in the pathway isoprenoid biosynthesis; isopentenyl diphosphate biosynthesis via DXP pathway; isopentenyl diphosphate from 1-deoxy-D-xylulose 5-phosphate: step 3/6. Functionally, catalyzes the phosphorylation of the position 2 hydroxy group of 4-diphosphocytidyl-2C-methyl-D-erythritol. The protein is 4-diphosphocytidyl-2-C-methyl-D-erythritol kinase of Shewanella baltica (strain OS185).